The following is a 287-amino-acid chain: Outer membrane protein TP0453 (287 aa).

Residues 1–24 (MIRRRYRGCTQGAWIVSVGMLFAS) form the signal peptide. Cys-25 is lipidated: N-palmitoyl cysteine. The S-diacylglycerol cysteine moiety is linked to residue Cys-25. 9 amphipathic helix regions span residues 36–40 (PLGVV), 56–63 (ENLISRII), 69–77 (KADIKKIVD), 103–112 (YAFTNLIFSR), 155–162 (MSKMLSRL), 172–179 (PRFEKECT), 194–202 (GGHFITKLL), 240–250 (FPIQFLISRVL), and 270–279 (AERLASVISS).

As to quaternary structure, a mix of monomer and dimers; may integrate into the membrane as a dimer. Post-translationally, palmitoylated upon expression of a fusion protein with first 46 residues fused to PhoA in E.coli.

Its subcellular location is the cell outer membrane. Its function is as follows. Might be involved in ligand transport, alters membrane permeability at acidic pH (4.0 to 5.5). Incubation of the non-lipidated form with lipid vesicles increases their permeability. This Treponema pallidum (strain Nichols) protein is Outer membrane protein TP0453.